Reading from the N-terminus, the 138-residue chain is MLQPKRTKFRKQHKGRNRGVATRGSKVSFGEFGLKAVGRGRITARQLEAARRAISRHVKRGGRIWIRIFPDKPISKKPAEVRMGKGKGNPEYWVALIQPGKVLYEMEGVTEEVAREAFALGAAKLPVQTAFVSRRVMG.

The segment covering 1–17 (MLQPKRTKFRKQHKGRN) has biased composition (basic residues). The interval 1–22 (MLQPKRTKFRKQHKGRNRGVAT) is disordered.

The protein belongs to the universal ribosomal protein uL16 family. As to quaternary structure, part of the 50S ribosomal subunit.

Functionally, binds 23S rRNA and is also seen to make contacts with the A and possibly P site tRNAs. This Acidithiobacillus ferrooxidans (strain ATCC 23270 / DSM 14882 / CIP 104768 / NCIMB 8455) (Ferrobacillus ferrooxidans (strain ATCC 23270)) protein is Large ribosomal subunit protein uL16.